The primary structure comprises 229 residues: UPF0173 metal-dependent hydrolase SH1218 (229 aa).

Belongs to the UPF0173 family.

The sequence is that of UPF0173 metal-dependent hydrolase SH1218 from Staphylococcus haemolyticus (strain JCSC1435).